The primary structure comprises 330 residues: DNA-directed RNA polymerase subunit alpha (330 aa).

The alpha N-terminal domain (alpha-NTD) stretch occupies residues 1–231 (MAILAFQKPD…IYHFMLFSDE (231 aa)). Positions 253–330 (MRQLLKTKLV…DISKYKLDKE (78 aa)) are alpha C-terminal domain (alpha-CTD).

This sequence belongs to the RNA polymerase alpha chain family. In terms of assembly, homodimer. The RNAP catalytic core consists of 2 alpha, 1 beta, 1 beta' and 1 omega subunit. When a sigma factor is associated with the core the holoenzyme is formed, which can initiate transcription.

The catalysed reaction is RNA(n) + a ribonucleoside 5'-triphosphate = RNA(n+1) + diphosphate. Its function is as follows. DNA-dependent RNA polymerase catalyzes the transcription of DNA into RNA using the four ribonucleoside triphosphates as substrates. The chain is DNA-directed RNA polymerase subunit alpha from Phocaeicola vulgatus (strain ATCC 8482 / DSM 1447 / JCM 5826 / CCUG 4940 / NBRC 14291 / NCTC 11154) (Bacteroides vulgatus).